A 475-amino-acid chain; its full sequence is Cysteine--tRNA ligase (475 aa).

Zn(2+) is bound at residue Cys28. The 'HIGH' region motif lies at 30 to 40; the sequence is PTVYDYAHIGN. Cys213, His238, and Glu242 together coordinate Zn(2+). Positions 270–274 match the 'KMSKS' region motif; sequence KMSKS. An ATP-binding site is contributed by Lys273.

This sequence belongs to the class-I aminoacyl-tRNA synthetase family. Monomer. It depends on Zn(2+) as a cofactor.

The protein resides in the cytoplasm. The catalysed reaction is tRNA(Cys) + L-cysteine + ATP = L-cysteinyl-tRNA(Cys) + AMP + diphosphate. This chain is Cysteine--tRNA ligase (cysS), found in Chlamydia muridarum (strain MoPn / Nigg).